Here is a 530-residue protein sequence, read N- to C-terminus: Polyprotein pp62 (530 aa).

This sequence belongs to the asfivirus polyprotein pp62 family. As to quaternary structure, monomer. Predominantly exists as a monomer, with very little dimers. Homodimerization seems to be linked to low pH. Homodimer; disulfide-linked. Homotrimer; disulfide-linked. Homohexamer. Post-translationally, monoubiquitinated in vitro by viral UBCv1. Specific enzymatic cleavages in vivo by the viral pS273R protease yield mature proteins.

It localises to the host cytoplasm. The protein localises to the host perinuclear region. The protein resides in the virion. In terms of biological role, essential for the correct assembly and maturation of the core of the virion. Its function is as follows. Component of the core shell. Binds to phosphatidylserine, which may enable the core shell binding with the inner membrane. Functionally, component of the core shell. Binds to phosphatidylserine and DNA, which may link the core shell to the inner membrane and to the viral nucleoid. Component of the core shell. The protein is Polyprotein pp62 of African swine fever virus (strain Badajoz 1971 Vero-adapted) (Ba71V).